Here is a 370-residue protein sequence, read N- to C-terminus: Putative alanine racemase 2 (370 aa).

The active-site Proton acceptor; specific for D-alanine is the K38. An N6-(pyridoxal phosphate)lysine modification is found at K38. Y266 acts as the Proton acceptor; specific for L-alanine in catalysis.

This sequence belongs to the alanine racemase family. Pyridoxal 5'-phosphate is required as a cofactor.

The catalysed reaction is L-alanine = D-alanine. The sequence is that of Putative alanine racemase 2 (alr2) from Schizosaccharomyces pombe (strain 972 / ATCC 24843) (Fission yeast).